Here is a 120-residue protein sequence, read N- to C-terminus: NAD(P)H-quinone oxidoreductase subunit 3, chloroplastic (120 aa).

3 helical membrane-spanning segments follow: residues 9-29 (IFWAFLLISSAIPVLAFLISG), 64-84 (MFALVFVVFDVETVFLYPWAM), and 88-108 (VLGVSAFIEAFIFVLILILGL).

It belongs to the complex I subunit 3 family. In terms of assembly, NDH is composed of at least 16 different subunits, 5 of which are encoded in the nucleus.

The protein localises to the plastid. The protein resides in the chloroplast thylakoid membrane. The catalysed reaction is a plastoquinone + NADH + (n+1) H(+)(in) = a plastoquinol + NAD(+) + n H(+)(out). It catalyses the reaction a plastoquinone + NADPH + (n+1) H(+)(in) = a plastoquinol + NADP(+) + n H(+)(out). Its function is as follows. NDH shuttles electrons from NAD(P)H:plastoquinone, via FMN and iron-sulfur (Fe-S) centers, to quinones in the photosynthetic chain and possibly in a chloroplast respiratory chain. The immediate electron acceptor for the enzyme in this species is believed to be plastoquinone. Couples the redox reaction to proton translocation, and thus conserves the redox energy in a proton gradient. The polypeptide is NAD(P)H-quinone oxidoreductase subunit 3, chloroplastic (Arabidopsis thaliana (Mouse-ear cress)).